The following is a 2038-amino-acid chain: MLRVVVESASINPPLSTTPKAFVTVYFRDMMKRTRVEEGHDPIWNETLIWHLWNQPLENDSFLKVILQDSVSKKKERFIGLATVPLKRLAQRPKEVMFVRDLILLNHSMKPTNCTVTLHVAQIYDQDTEMTGNEELLGSTVNEVTQKKLMVSGLPMHRALASKPQHFQVRVKVFEARQLLGNNIKPVVKVNIADQQHLTRIKMGNNPFFNEIFFQNFHEVPAKFFEENISIEVVDSAASRSKAEIGRFQTDIGFIYHSPGHTLLRKWLGLCQRNKTTSGVRGYLKVTICALGVGDQALVDQKLPYEQNTRVQIFKSKEVPVSLAYLQFFIYCAEDLHFGTHKSATPVLEVELIGDKLRTKPQNPSDNPIWNQILTFQIQLPCLSSYIKFRVMDCSKYKCQDEIGSASLCLSQISSTGEEIQGMYSGFLPCFGPSFLTLRGGKKPPFRTSEEGTCIMDAVQHGLAYRGRIFVEIVTKIKSQQDSVMKDLSQEVTQVEMQYYRQKYGLCVIFLSCTMMPKFKDLIQFEVSMGHYGNKTDPNYKPLVSTTQYSPVIYDGTTYHYVPWYNTKPVVAVTSNWEDVGFRMNCLNLLHITRDRLKTNLDILKSIRNPRDPALLQQWEKLLKELQEDCRRPLPCMTDQPRANSLDRNKWQLRSQLLQQLAQMAKEAKPVNMVGTAKEWLHRLNAVIPEPQESLPDVLIWLMSRQQRVAYARVPAHTVLFSPAGPLSSGKFCGKIQNILLQYPEGEGQDTFPASLRVCMWLGNVKYSKNLKLLQQGSMVVYAETYENQAKTRDDWGQQGLYHCPNFSDVMGRKALPKTDFKAPPGWHWKDDWVVEPQRRLLLDIDINKSQVLEEVYENQLRNATGAWVPAAIPNTDVNGQPVEALENVKCPQGWHFKKNWIVKLNHAVDSEGWEYGVGIPPSGLPQIWNSVEKTYHSCRRRRWVRVRFRNHKELGQERSQEQETLSFLQMQDLSEEGKEGWEYGTFDSRFHLDPQPTSRFRRRCWHRQLAPNKDRGVASIFLLEGSLAVEQKDQPRKEMEKTRSWQPWKDLRHTPEDPRIPTTPFIYYILNKPHYYQLFCYIYQARNLMYNQILTFQEPFIQVVFLNHSLCTQTLRSSAAPTWSQSIIFQHLLLFEDPKDTRENPPLVVLELWQHDSRGNKILWGRSMWPPVVWLGLQDWVFTPLRWHPLVRELGEEEGEILASCELILETQKLKELHPPILSIPCKDGIYLLPKNIQPTMKMMAIEIMAWGLRNMTKVRYPQLLLECGGESLKTEPISNFQENPNFPTSTFFFTVFMPLEETHAQPLVVKVVDNQEYGQQIVVGQANIDFLQPYFCDPWSLNYTTVKLPTLSVKKPDTFLDFVYKKFWFDSSKDEEVYEEEVDWWSKLFWATGDADKSLNYNHKSYHTLKVYDCELEAVLTFKGLQDFCQTFKLYQEKPKVDSPVVGEFKGLFRIYPFPEDPEAPKPPRQFSAWPEIEDFPQMCLVRVYLIRAINLQPQDYNGLCDPYVILKLGQTKLGSRDSYYPNTLDPIFGMMYELTCNIPLEKDLEIQLFDFDLITADDEIGSTVIDLENRLLSGFGARCGLSKSYCKSGPFKWRDQMTPSYLLYRYAKQKGLPPPVFDLEGDSLYYNGETFKLQSFESAPPTYKHLGPKKERLALYILNTQGLVPEHVETRTLHSNSQPGIDQGKIQMWVDIFPKMLGPPGPQVNISPRKPKRYQLRCIIWSTAEVDLVQETFSKEKMSDIYVKGWLFGLEEDTQKTDVHYHSLTGEATFNWRFIFTMDYLTTERACVQSQKDYIWSLDPTSTKFPARLMIQIWDNDFFSPDDFLGVLELDLSDMPLPAQNIKQCSLKMMETDSKWPFTPQKRISLFKKTNVTGWWPCQVLDGDKWRLSGKVKMTLEMLSEREALIRPAGRGQSEPNQFPMLHPPERNDSFLLWYQSPIKNFCYAVCKRYRSKIICLVVTLVIGFILLNFVYSAPSYFAMNWIKPQLRLSSPIKIVNLIGTVNTSNINSSILTMEGSTYHASHVFPEAPAP.

C2 domains follow at residues 1 to 100 (MLRV…MFVR), 145 to 265 (TQKK…TLLR), 307 to 424 (QNTR…QGMY), 1055 to 1186 (TPED…FTPL), 1225 to 1345 (IPCK…SLNY), 1467 to 1587 (PKPP…ARCG), and 1705 to 1853 (GPPG…KQCS). Residues aspartate 1502, aspartate 1508, aspartate 1557, phenylalanine 1558, aspartate 1559, aspartate 1565, aspartate 1824, serine 1827, and aspartate 1830 each coordinate Ca(2+). Residues 1961–1981 (IICLVVTLVIGFILLNFVYSA) form a helical membrane-spanning segment.

The protein belongs to the ferlin family. In terms of assembly, interacts (via second C2 domain) with EHD1 and EHD2. The cofactor is Ca(2+). As to expression, expressed in differentiating myoblasts and myotubes.

The protein resides in the cell membrane. Its subcellular location is the membrane. Functionally, plays a role in myoblast fusion; probable mediator of endocytic recycling for membrane trafficking events during myotube formation. In Mus musculus (Mouse), this protein is Fer-1-like protein 5 (Fer1l5).